Here is a 679-residue protein sequence, read N- to C-terminus: MDSSSSSNYFSVGSTNPSAVVLLYSKELKKWDEFEDILEERRHVSDLKFAMKCYTPLVYKGITPCKPSDIKNSVLNSEEIHYVIKQLSMESLQSVDVLREEVCEILDEMSHKLRLGAIRFFAFALSKIFKQIFSKVCVNEEGIQKLQRAIQEHPVVLLPSHRSYIDFLMLSFLLYNYDLPVPVIAAGMDFLGMKMIGELLRMSGAFFMRRTFGGNKLYWAVFSEYVKTMLRNGYAPVEFFLEGTRSRSAKTLTPKFGLLSIVMEPFFKREVFDTYLVPISISYDKILEETLYAYELLGVPKPKESTTGLLKARRILSENFGSIYVYFGDPVSLRSLASGRMSRSPYNLVPRYIPQKQSEDMHAFVTEVAYKMQLLQIENLVLSPWPLIVAVLLQNRPSMDFDALLEKTLWLKGLTQAFGGFLIWPDNEPAEEVVQHHILLHSNIASLVKDQVILKLESGDSEVVDGLIFQHITLLTCSTYRNQLLNIFVRPSLVAVALQMTPGFRKEDVYSAFRFLRDVFSDEFIFFPGNTVKDFEEGCYLLCKSETIQMTTRDILVTEKGNAVLEFLIGLFRPFVECYKLLCIYLLKEEEEHFTEKQYLAAVRKFTSQLLNQGASQCYDVLSSDVQKNALAAFVRLGVVEKKKVNNDYIFSVNEPATTKLEEMLGCKIPIGKPATAKL.

Position 11 is a phosphoserine (S11). The HXXXXD motif motif lies at 161–166 (HRSYID). An N6-acetyllysine modification is found at K642.

The protein belongs to the GPAT/DAPAT family. Part of a heterotrimeric complex composed of GNPAT, AGPS and a modified form of GNPAT.

It localises to the peroxisome membrane. It carries out the reaction dihydroxyacetone phosphate + an acyl-CoA = a 1-acylglycerone 3-phosphate + CoA. It catalyses the reaction dihydroxyacetone phosphate + hexadecanoyl-CoA = 1-hexadecanoylglycerone 3-phosphate + CoA. It participates in membrane lipid metabolism; glycerophospholipid metabolism. Functionally, dihydroxyacetonephosphate acyltransferase catalyzing the first step in the biosynthesis of plasmalogens, a subset of phospholipids that differ from other glycerolipids by having an alkyl chain attached through a vinyl ether linkage at the sn-1 position of the glycerol backbone, and which unique physical properties have an impact on various aspects of cell signaling and membrane biology. This chain is Dihydroxyacetone phosphate acyltransferase, found in Oryctolagus cuniculus (Rabbit).